We begin with the raw amino-acid sequence, 303 residues long: UDP-N-acetylenolpyruvoylglucosamine reductase (303 aa).

Residues 27 to 217 (KVGGISQVFY…QTVRKLTQPI (191 aa)) enclose the FAD-binding PCMH-type domain. Arginine 175 is an active-site residue. Catalysis depends on serine 224, which acts as the Proton donor. Residue glutamate 294 is part of the active site.

It belongs to the MurB family. The cofactor is FAD.

It localises to the cytoplasm. The enzyme catalyses UDP-N-acetyl-alpha-D-muramate + NADP(+) = UDP-N-acetyl-3-O-(1-carboxyvinyl)-alpha-D-glucosamine + NADPH + H(+). The protein operates within cell wall biogenesis; peptidoglycan biosynthesis. Cell wall formation. In Orientia tsutsugamushi (strain Ikeda) (Rickettsia tsutsugamushi), this protein is UDP-N-acetylenolpyruvoylglucosamine reductase.